The primary structure comprises 276 residues: Elongation factor Ts, mitochondrial (276 aa).

This sequence belongs to the EF-Ts family.

The protein localises to the mitochondrion. Its function is as follows. Associates with the EF-Tu.GDP complex and induces the exchange of GDP to GTP. It remains bound to the aminoacyl-tRNA.EF-Tu.GTP complex up to the GTP hydrolysis stage on the ribosome. This is Elongation factor Ts, mitochondrial from Leishmania infantum.